Reading from the N-terminus, the 584-residue chain is MISKIKKDLENKISKTIKELALKQNITLDKINIIMKKPPKSELGDLSILIFEFSKILKLSTSVIIEEIIKQIGKKYTTKSMGAYLNIKFNRKEYIKDIIKKVNEQKEKYGINNVLKNKRIIIEFSSPNTNKPLHVGHLRNDIIGESLSRILKASGGQVTKINLINDRGTHICKTMLAYKKFGNNTTPELSLKKGDHLIGDFYVKYNEYAKNNKMAEDEIQQLLCKWEEGDEETVKLWKKLNKWAIEGIKETYKLTNITFDKIYLESEIFKIGREIILQGLEKGLCYKREDGAICINIPIETNEMTDQKFKQKVLLRANGTSIYLTQDLGNILTRKNEFDFDEMIYVVGSEQIHHFKTLFYVADKLGITKENNLVHLSYGMVNLPTGKMKSREGHVIDADNLIHDLSESTMIEIKKRHSNEQDSKKIALNISLGAIHYYLLKTAIHKDILFNKEESLSFTGNSGPYIQYVGARINSILDKYDELNLPSKNINFDLLINENEWAIIKIISEFEEYIIKAAKDRNPSIIVNYSYLLAKSFSAYYQDTKIIDKDNPELTHARTDLSKAVLQTIKNCMHLLNIPYMKKM.

The short motif at 127–137 is the 'HIGH' region element; that stretch reads PNTNKPLHVGH.

The protein belongs to the class-I aminoacyl-tRNA synthetase family. As to quaternary structure, monomer.

The protein localises to the cytoplasm. The enzyme catalyses tRNA(Arg) + L-arginine + ATP = L-arginyl-tRNA(Arg) + AMP + diphosphate. In Borrelia turicatae (strain 91E135), this protein is Arginine--tRNA ligase.